Reading from the N-terminus, the 299-residue chain is tRNA dimethylallyltransferase (299 aa).

13–20 contacts ATP; that stretch reads GPTASGKT. Residue 15–20 participates in substrate binding; that stretch reads TASGKT. Residues 38–41 are interaction with substrate tRNA; it reads DSRQ.

Belongs to the IPP transferase family. In terms of assembly, monomer. Requires Mg(2+) as cofactor.

It carries out the reaction adenosine(37) in tRNA + dimethylallyl diphosphate = N(6)-dimethylallyladenosine(37) in tRNA + diphosphate. Functionally, catalyzes the transfer of a dimethylallyl group onto the adenine at position 37 in tRNAs that read codons beginning with uridine, leading to the formation of N6-(dimethylallyl)adenosine (i(6)A). The protein is tRNA dimethylallyltransferase of Synechococcus sp. (strain CC9605).